Consider the following 63-residue polypeptide: Large ribosomal subunit protein bL28 (63 aa).

This sequence belongs to the bacterial ribosomal protein bL28 family.

The polypeptide is Large ribosomal subunit protein bL28 (Heliobacterium modesticaldum (strain ATCC 51547 / Ice1)).